The chain runs to 354 residues: MKSFLSDKAKSIEPYTPGEQPKDKNYIKLNTNESPYPPSPYVKKALIESNFDDLRLYPDPNVSDLKKEIAELYNINTNNIFIGNGSDEILAFCFMAFFNRGDKIYYPNITYSFYSVYSSLFDLNEVKIPLKDDFTIDINDYKNLDSGIFIANPNAPTGLLLTLDQLEEIIINNKDNIVIIDEAYIDFAAIESAYKLTKKYDNLLVVQTFSKSRSLAGIRLGFAIGNENLIQGLKNIKYSFNSYTINRLSIIAGIEAIKDNQYFKDTVNKVINTREKTKIKLKELGFNVLDSKSNFIFISHKNIFAEDLYLKLKDKGILVRYFKSDLINNYIRVTIGTDEEMDIFVEKIKYIIKN.

Over residues 1–11 the composition is skewed to basic and acidic residues; sequence MKSFLSDKAKS. The disordered stretch occupies residues 1-33; that stretch reads MKSFLSDKAKSIEPYTPGEQPKDKNYIKLNTNE. K211 is modified (N6-(pyridoxal phosphate)lysine).

It belongs to the class-II pyridoxal-phosphate-dependent aminotransferase family. Histidinol-phosphate aminotransferase subfamily. Homodimer. Requires pyridoxal 5'-phosphate as cofactor.

The catalysed reaction is L-histidinol phosphate + 2-oxoglutarate = 3-(imidazol-4-yl)-2-oxopropyl phosphate + L-glutamate. Its pathway is amino-acid biosynthesis; L-histidine biosynthesis; L-histidine from 5-phospho-alpha-D-ribose 1-diphosphate: step 7/9. The chain is Histidinol-phosphate aminotransferase from Brachyspira hyodysenteriae (strain ATCC 49526 / WA1).